Consider the following 111-residue polypeptide: Phosphoribosyl-AMP cyclohydrolase (111 aa).

Aspartate 80 contributes to the Mg(2+) binding site. Cysteine 81 provides a ligand contact to Zn(2+). 2 residues coordinate Mg(2+): aspartate 82 and aspartate 84. Residues cysteine 97 and cysteine 104 each coordinate Zn(2+).

Belongs to the PRA-CH family. Homodimer. The cofactor is Mg(2+). Zn(2+) is required as a cofactor.

It localises to the cytoplasm. It carries out the reaction 1-(5-phospho-beta-D-ribosyl)-5'-AMP + H2O = 1-(5-phospho-beta-D-ribosyl)-5-[(5-phospho-beta-D-ribosylamino)methylideneamino]imidazole-4-carboxamide. It participates in amino-acid biosynthesis; L-histidine biosynthesis; L-histidine from 5-phospho-alpha-D-ribose 1-diphosphate: step 3/9. Functionally, catalyzes the hydrolysis of the adenine ring of phosphoribosyl-AMP. In Mycobacterium ulcerans (strain Agy99), this protein is Phosphoribosyl-AMP cyclohydrolase.